Consider the following 86-residue polypeptide: Photosystem I reaction center subunit PsaK 1 (86 aa).

The next 2 helical transmembrane spans lie at 14-34 and 61-81; these read LSWSPKVAGVMIACNILAIAF and AVLGTASFGHILGAGVILGLA.

It belongs to the PsaG/PsaK family.

It is found in the cellular thylakoid membrane. This Synechocystis sp. (strain ATCC 27184 / PCC 6803 / Kazusa) protein is Photosystem I reaction center subunit PsaK 1 (psaK1).